We begin with the raw amino-acid sequence, 269 residues long: 4-hydroxy-tetrahydrodipicolinate reductase (269 aa).

NAD(+)-binding positions include 8–13 and Glu-34; that span reads GAAGRM. An NADP(+)-binding site is contributed by Arg-35. NAD(+) is bound by residues 98 to 100 and 122 to 125; these read GTT and APNY. Residue His-155 is the Proton donor/acceptor of the active site. His-156 is a binding site for (S)-2,3,4,5-tetrahydrodipicolinate. Catalysis depends on Lys-159, which acts as the Proton donor. (S)-2,3,4,5-tetrahydrodipicolinate is bound at residue 165-166; the sequence is GT.

Belongs to the DapB family.

It localises to the cytoplasm. It carries out the reaction (S)-2,3,4,5-tetrahydrodipicolinate + NAD(+) + H2O = (2S,4S)-4-hydroxy-2,3,4,5-tetrahydrodipicolinate + NADH + H(+). It catalyses the reaction (S)-2,3,4,5-tetrahydrodipicolinate + NADP(+) + H2O = (2S,4S)-4-hydroxy-2,3,4,5-tetrahydrodipicolinate + NADPH + H(+). Its pathway is amino-acid biosynthesis; L-lysine biosynthesis via DAP pathway; (S)-tetrahydrodipicolinate from L-aspartate: step 4/4. Its function is as follows. Catalyzes the conversion of 4-hydroxy-tetrahydrodipicolinate (HTPA) to tetrahydrodipicolinate. The chain is 4-hydroxy-tetrahydrodipicolinate reductase from Aliivibrio fischeri (strain ATCC 700601 / ES114) (Vibrio fischeri).